Reading from the N-terminus, the 425-residue chain is MIKQEFLKKMQEKKYFQDHRKVLIAVSGGLDSMTLLQLLIVSQKELAIELAIAHVNHKQRPESDQEEKALVKIAEQLGVKIFTSSFSGNFSENAARQFRYDFFGKVMQEGHYTALVTAHHADDQAETVFMRLLRGARLRHLSGMKAVQPFACGELIRPLLTFHKSDFPDIQHFEDSSNFQNDYLRNRIRNLYLPDLEKENPQFKDSLRYLGKEIEDWQTALSHLTRDLDIENVQVFHQQIPQVQRFLLQNYLENFSGLNLSKQQFEEVLNILQTKANYQHTLKKDYELVKDYQRFEIRKISRKPDLKMDSILLEFENLIEFGYYRFSFGIPLSGENIQKIFVSRETSLTLRFRKEGDSILLNGHHKKLRRLFIDKKVSFEERNSSVVVEQNHQILAILNIAISDLSKALKSDIMSTVLYIQKIDG.

Ser27–Ser32 serves as a coordination point for ATP.

It belongs to the tRNA(Ile)-lysidine synthase family.

The protein localises to the cytoplasm. It carries out the reaction cytidine(34) in tRNA(Ile2) + L-lysine + ATP = lysidine(34) in tRNA(Ile2) + AMP + diphosphate + H(+). In terms of biological role, ligates lysine onto the cytidine present at position 34 of the AUA codon-specific tRNA(Ile) that contains the anticodon CAU, in an ATP-dependent manner. Cytidine is converted to lysidine, thus changing the amino acid specificity of the tRNA from methionine to isoleucine. This chain is tRNA(Ile)-lysidine synthase, found in Streptococcus sanguinis (strain SK36).